The following is a 391-amino-acid chain: Succinate--CoA ligase [ADP-forming] subunit beta (391 aa).

The ATP-grasp domain maps to 9 to 248; it reads KDILRKFGVA…ITEEDPFEVE (240 aa). ATP-binding positions include K50, 57 to 59, E103, M106, and E111; that span reads GRG. Mg(2+) contacts are provided by N203 and D217. Residues N268 and 325–327 each bind substrate; that span reads GIV.

Belongs to the succinate/malate CoA ligase beta subunit family. Heterotetramer of two alpha and two beta subunits. The cofactor is Mg(2+).

The catalysed reaction is succinate + ATP + CoA = succinyl-CoA + ADP + phosphate. It catalyses the reaction GTP + succinate + CoA = succinyl-CoA + GDP + phosphate. Its pathway is carbohydrate metabolism; tricarboxylic acid cycle; succinate from succinyl-CoA (ligase route): step 1/1. Succinyl-CoA synthetase functions in the citric acid cycle (TCA), coupling the hydrolysis of succinyl-CoA to the synthesis of either ATP or GTP and thus represents the only step of substrate-level phosphorylation in the TCA. The beta subunit provides nucleotide specificity of the enzyme and binds the substrate succinate, while the binding sites for coenzyme A and phosphate are found in the alpha subunit. This is Succinate--CoA ligase [ADP-forming] subunit beta from Chlorobium phaeovibrioides (strain DSM 265 / 1930) (Prosthecochloris vibrioformis (strain DSM 265)).